Consider the following 344-residue polypeptide: Short chain dehydrogenase/reductase mfmJ (344 aa).

NADP(+)-binding residues include Leu-51, Lys-76, Asp-99, Asn-126, Tyr-213, and Lys-217. Catalysis depends on Tyr-213, which acts as the Proton donor. The Lowers pKa of active site Tyr role is filled by Lys-217.

It belongs to the short-chain dehydrogenases/reductases (SDR) family.

Short chain dehydrogenase/reductase; part of the gene cluster that mediates the biosynthesis of the phthalide-terpenoid hybrid 11'-O-desmethylfendlerol. MfmJ seems not to be involved directly in the biosynthesis of 11'-O-desmethylfendlerol and its role has still to be determined. The biosynthesis of 11'-O-desmethylfendlerol begins with the NR-PKS mfmB that forms 3,5-dimethylorsellinic acid (DMOA), which is then transformed into the phthalide 5,7-dihydroxy-4-(hydroxymethyl)-6-methylphthalide by the cytochrome P450 monooxygenase mfmA and the hydrolase mfmC. Subsequently, the methyltransferase mfmE catalyzes 7-O-methylation to yield 5-hydroxy-4-(hydroxymethyl)-7-methoxy-6-methylphthalide, which undergoes C-3 hydroxylation by the cytochrome P450 monooxygenase mfmF. The resultant cyclopolic acid (2,5-dihydroxy-4-(hydroxymethyl)-7-methoxy-6-methylphthalide) is then farnesylated by the DMATS-type prenyltransferase mfmD to afford 5-O-farnesylcyclopolic acid. Finally, the Pyr4-family terpene cyclase mfmH cyclizes the farnesyl moiety of 5-O-farnesylcyclopolic acid into a drimane-like structure, thus completing the biosynthesis of 11'-O-desmethylfendlerol. The protein is Short chain dehydrogenase/reductase mfmJ of Annulohypoxylon moriforme (Filamentous fungus).